The chain runs to 474 residues: Cytochrome c biogenesis protein CcsB (474 aa).

3 helical membrane passes run 36-56, 96-116, and 182-202; these read LKLA…GTVI, SWWF…CTFR, and VGPI…MIGA.

This sequence belongs to the Ccs1/CcsB family. May interact with CcsA.

The protein localises to the cell inner membrane. In terms of biological role, required during biogenesis of c-type cytochromes (cytochrome c6 and cytochrome f) at the step of heme attachment. This is Cytochrome c biogenesis protein CcsB from Gloeobacter violaceus (strain ATCC 29082 / PCC 7421).